The sequence spans 139 residues: Low molecular weight protein-tyrosine-phosphatase PtpB (139 aa).

Residue cysteine 7 is the Nucleophile of the active site. Residue arginine 13 is part of the active site. The active-site Proton donor is aspartate 111.

The protein belongs to the low molecular weight phosphotyrosine protein phosphatase family.

It carries out the reaction O-phospho-L-tyrosyl-[protein] + H2O = L-tyrosyl-[protein] + phosphate. Its function is as follows. Dephosphorylates the phosphotyrosine-containing proteins. The chain is Low molecular weight protein-tyrosine-phosphatase PtpB (ptpB) from Staphylococcus epidermidis (strain ATCC 35984 / DSM 28319 / BCRC 17069 / CCUG 31568 / BM 3577 / RP62A).